The sequence spans 286 residues: Phycobilisome 31.8 kDa linker polypeptide, phycoerythrin-associated, rod (286 aa).

In terms of domain architecture, PBS-linker spans 2–179 (PFGPASRLGV…LVRGASSSSL (178 aa)). A CpcD-like domain is found at 231–286 (GKVYRIEVTGYRAKTFNNISKFRRSNQVFLVPYEKLSQEYQRIHQQGGVIASITPV).

It belongs to the phycobilisome linker protein family. As to quaternary structure, the phycobilisome is a hemidiscoidal structure that is composed of two distinct substructures: a core complex and six rods radiating from the core.

It is found in the cellular thylakoid membrane. Functionally, rod linker protein, associated with phycoerythrocyanin. Linker polypeptides determine the state of aggregation and the location of the disk-shaped phycobiliprotein units within the phycobilisome and modulate their spectroscopic properties in order to mediate a directed and optimal energy transfer. This is Phycobilisome 31.8 kDa linker polypeptide, phycoerythrin-associated, rod (cpeC) from Microchaete diplosiphon (Fremyella diplosiphon).